The primary structure comprises 450 residues: Protein tweety homolog 1 (450 aa).

Residues 1–43 are Extracellular-facing; the sequence is MGAPPGYRPSAWVHLLHQLPRADFQLRPVPSVFAPQEQEYQQA. A helical membrane pass occupies residues 44–64; sequence LLLVAALAGLGLGLSLIFIAV. Residues 65-88 lie on the Cytoplasmic side of the membrane; that stretch reads YLIRFCCCRPPEPPGSKIPSPGGG. Residues 89–109 traverse the membrane as a helical segment; it reads CVTWSCIVALLAGCTGIGIGF. Residues 110 to 214 lie on the Extracellular side of the membrane; sequence YGNSETSDGV…NVSFVEEYRW (105 aa). N-linked (GlcNAc...) asparagine glycans are attached at residues asparagine 130 and asparagine 205. The chain crosses the membrane as a helical span at residues 215–235; that stretch reads LAYVLLLLLELLVCLFTLLGL. The Cytoplasmic segment spans residues 236 to 240; the sequence is AKQSK. The chain crosses the membrane as a helical span at residues 241–261; that stretch reads WLVIVMTVMSLLVLVLSWGSM. Over 262-390 the chain is Extracellular; sequence GLEAATAVGL…LRGLCEDALE (129 aa). 2 cysteine pairs are disulfide-bonded: cysteine 275–cysteine 385 and cysteine 303–cysteine 370. Asparagine 284 and asparagine 355 each carry an N-linked (GlcNAc...) asparagine glycan. Residues 391–411 form a helical membrane-spanning segment; it reads GLLFLLLFSLLSAGALATALC. Residues 412 to 450 lie on the Cytoplasmic side of the membrane; that stretch reads SLPRAWALFPPSDDYDDTDDDDPFNPQESKRFVQWQSSI. A disordered region spans residues 428-450; that stretch reads DTDDDDPFNPQESKRFVQWQSSI. The residue at position 440 (serine 440) is a Phosphoserine.

This sequence belongs to the tweety family. Homotetramer; disulfide-linked. Homodimer. Post-translationally, N-glycosylated. Contains high-mannose, hybrid and complex oligosaccharides. As to expression, expressed in brain, eye, ovary and testis, and at lower levels in muscle, placenta, liver and lung.

It localises to the cell membrane. The catalysed reaction is chloride(in) = chloride(out). The enzyme catalyses L-glutamate(out) = L-glutamate(in). Calcium-independent, swelling-dependent volume-regulated anion channel (VRAC-swell) which plays a pivotal role in the process of regulatory volume decrease (RVD) in the brain through the efflux of anions like chloride and organic osmolytes like glutamate. Functionally, ca(2+)-independent, swelling-activated chloride channel, possibly involved in regulation of cell volume. This is Protein tweety homolog 1 (TTYH1) from Homo sapiens (Human).